An 89-amino-acid chain; its full sequence is Large ribosomal subunit protein bL31B (89 aa).

Belongs to the bacterial ribosomal protein bL31 family. Type B subfamily. In terms of assembly, part of the 50S ribosomal subunit.

This is Large ribosomal subunit protein bL31B from Actinobacillus pleuropneumoniae serotype 5b (strain L20).